A 204-amino-acid polypeptide reads, in one-letter code: Guanylate kinase (204 aa).

The Guanylate kinase-like domain maps to 5 to 184 (GLLLVLSGPS…AVDHIKAIVD (180 aa)). Residue 12-19 (GPSGVGKG) coordinates ATP.

The protein belongs to the guanylate kinase family.

The protein resides in the cytoplasm. The enzyme catalyses GMP + ATP = GDP + ADP. Functionally, essential for recycling GMP and indirectly, cGMP. The polypeptide is Guanylate kinase (Lactobacillus acidophilus (strain ATCC 700396 / NCK56 / N2 / NCFM)).